A 1051-amino-acid chain; its full sequence is Anucleate primary sterigmata protein B (1051 aa).

2 coiled-coil regions span residues 10-200 (IDRL…YAIA) and 239-285 (STLV…ELKL). Residues 58-90 (KDNQGLKRKIRDLEKQLKDQQSDKESMLNHDPE) are compositionally biased toward basic and acidic residues. 2 disordered regions span residues 58–100 (KDNQ…DRDH) and 141–160 (LKSL…REER). Positions 294-303 (AGDSILDRSA) are enriched in basic and acidic residues. Disordered regions lie at residues 294-329 (AGDS…AERE), 877-902 (NHPR…LAER), 909-928 (NTAA…QMTN), and 984-1051 (EERD…DIEV). Residues 309–321 (RPSSSISDRTGQS) are compositionally biased toward polar residues. 2 coiled-coil regions span residues 325 to 743 (DAER…RNSM) and 787 to 878 (RNLL…LQNH). 2 stretches are compositionally biased toward polar residues: residues 877 to 897 (NHPR…SSTI) and 916 to 928 (ARSS…QMTN). A coiled-coil region spans residues 950–1004 (NQEVWIKRLHELERRLKAEREARLLDRNGARRRLEERDAENKRLRAQLDRQRLRQ). 2 stretches are compositionally biased toward basic and acidic residues: residues 984–1001 (EERD…DRQR) and 1028–1040 (EGYR…HSSS).

Its subcellular location is the cytoplasm. Involved in regulation of nuclear migration. May be involved in regulating nuclear positioning. The polypeptide is Anucleate primary sterigmata protein B (apsB) (Emericella nidulans (strain FGSC A4 / ATCC 38163 / CBS 112.46 / NRRL 194 / M139) (Aspergillus nidulans)).